Here is a 428-residue protein sequence, read N- to C-terminus: Probable anion transporter 6 (428 aa).

Positions 1 to 22 (MKFPKRYAIVLLTFMCTNVCYI) are cleaved as a signal peptide. The next 11 membrane-spanning stretches (helical) occupy residues 47–67 (MILS…GWAA), 74–94 (LVLL…PLDP), 98–118 (ILLV…FPSI), 137–157 (LTTS…PSLV), 164–184 (SVFS…FKFA), 221–241 (ILFS…HYAL), 269–289 (LPYL…DHLI), 301–321 (KLLN…LPLF), 327–347 (AIFC…GFAV), 356–376 (FAGI…IVGV), and 401–421 (TVFF…LIFS).

It belongs to the major facilitator superfamily. Sodium/anion cotransporter (TC 2.A.1.14) family.

The protein resides in the cell membrane. Probable anion transporter. In Oryza sativa subsp. japonica (Rice), this protein is Probable anion transporter 6 (PHT4;6).